The chain runs to 1259 residues: Cingulin (1259 aa).

The head stretch occupies residues 9-324; it reads MADQPIPVGQ…EKFPSLQAQP (316 aa). The ZIM motif lies at 41-55; it reads QDSYGVAVRVQGIDG. The segment covering 69 to 79 has biased composition (basic and acidic residues); that stretch reads SSYDYDRHYSE. Disordered regions lie at residues 69–151, 169–232, 317–338, 941–969, and 1192–1259; these read SSYD…IDTK, VRGR…RQSL, FPSL…KKEL, KSRR…NSSR, and REME…TSSC. Polar residues predominate over residues 80-100; sequence RSSTLDTAYSQSSRESAWSRG. Residues 117-127 show a composition bias toward low complexity; the sequence is SATSQQSTSAS. Positions 128-145 are enriched in polar residues; sequence NKTNKNGLSTSSFSNQSS. Residues 179–204 show a composition bias toward basic and acidic residues; that stretch reads ALKDERKRSQSLDGRKNYQDTADSRE. A compositionally biased stretch (polar residues) spans 220-229; sequence VSSANRSFAR. A coiled-coil region spans residues 325-1218; it reads GEDTRSLGSQ…KTMEKESKRK (894 aa). Residues 326 to 338 show a composition bias toward basic and acidic residues; the sequence is EDTRSLGSQKKEL. Residues 1220-1259 are tail; that stretch reads IRPAHNDDDDLSSDGEYGGSYDPSSITSLLTESNLQTSSC. Positions 1241-1259 are enriched in polar residues; sequence DPSSITSLLTESNLQTSSC.

It belongs to the cingulin family. Parallel homodimer. Interacts with TJP1/ZO1 and TJP2/ZO2.

The protein resides in the cell junction. It is found in the tight junction. In terms of biological role, probably plays a role in the formation and regulation of the tight junction (TJ) paracellular permeability barrier, possibly by linking ZO proteins to the actomyosin cytoskeleton. This is Cingulin from Xenopus tropicalis (Western clawed frog).